The sequence spans 148 residues: UPF0756 membrane protein ESA_02180 (148 aa).

4 consecutive transmembrane segments (helical) span residues 4–24 (ITLLILLALAGLGFVSHNMAV), 51–71 (VTVGIIILTISVMAPIASGTL), 86–106 (LVAIAVGVFVSWLGGKGVALM), and 112–132 (IVAGLLVGTVLGVALFRGVPV).

Belongs to the UPF0756 family.

The protein resides in the cell membrane. The chain is UPF0756 membrane protein ESA_02180 from Cronobacter sakazakii (strain ATCC BAA-894) (Enterobacter sakazakii).